A 71-amino-acid chain; its full sequence is Translation initiation factor IF-1 (71 aa).

An S1-like domain is found at M1–G71.

This sequence belongs to the IF-1 family. In terms of assembly, component of the 30S ribosomal translation pre-initiation complex which assembles on the 30S ribosome in the order IF-2 and IF-3, IF-1 and N-formylmethionyl-tRNA(fMet); mRNA recruitment can occur at any time during PIC assembly.

It localises to the cytoplasm. One of the essential components for the initiation of protein synthesis. Stabilizes the binding of IF-2 and IF-3 on the 30S subunit to which N-formylmethionyl-tRNA(fMet) subsequently binds. Helps modulate mRNA selection, yielding the 30S pre-initiation complex (PIC). Upon addition of the 50S ribosomal subunit IF-1, IF-2 and IF-3 are released leaving the mature 70S translation initiation complex. The sequence is that of Translation initiation factor IF-1 from Pelagibacter ubique (strain HTCC1062).